The sequence spans 385 residues: Trans-enoyl reductase poxH (385 aa).

Residue 64–67 (QPYS) participates in NADP(+) binding. Substrate is bound at residue 156-163 (PDPAAPPI). Residues 199 to 202 (STSV), 223 to 226 (SGTD), Tyr241, and 289 to 290 (LG) contribute to the NADP(+) site. Residue 309–313 (HMAPL) coordinates substrate. 372–373 (KR) is an NADP(+) binding site.

Belongs to the zinc-containing alcohol dehydrogenase family. As to quaternary structure, monomer.

Its pathway is secondary metabolite biosynthesis. Functionally, trans-enoyl reductase; part of the gene cluster that mediates the biosynthesis of oxaleimides, cytotoxic compounds containing an unusual disubstituted succinimide moiety. The first step of the pathway is provided by the HR-PKS poxF that serves in a new mode of collaborative biosynthesis with the PKS-NRPS poxE, by providing the olefin containing amino acid substrate via the synthesis of an ACP-bound dec-4-enoate. The cytochrome P450 monooxygenase poxM-catalyzed oxidation at the alpha-position creates the enzyme-bound 2-hydroxydec-4-enoyl-ACP thioester, which may be prone to spontaneous hydrolysis to yield 2-hydroxydec-4-enoic acid due to increased electrophilicity of the carbonyl. 2-hydroxydec-4-enoic acid can then be further oxidized by poxM to yield the alpha-ketoacid 2-oxodec-4-enoicacid, which is reductively aminated by the aminotransferase poxL to yield (S,E)-2-aminodec-4-enoic acid. The Hybrid PKS-NRPS synthetase poxE then performs condensation between the octaketide product of its PKS modules and the amino group of (S,E)-2-aminodec-4-enoic acid which is activated and incorporated by the adenylation domain. The resulting aminoacyl product can be cyclized by the Diels-Alderase PoxQ and reductively released by the reductive (R) domain of poxE to yield an aldehyde intermediate. The released aldehyde is then substrate for a Knoevenagel condensation by the hydrolyase poxO followed by an oxidation at the 5-position of the pyrrolidone ring. The presence of the olefin from the amino acid building block allows for migration of the substituted allyl group to occur. This allylic transposition reaction takes place in a conjugate addition, semipinacol-like fashion to yield a succinimide intermediate. Iterative two-electron oxidations of the C7 methyl of the succinimide intermediate to the carboxylic acid can be catalyzed by one of two remaining cytochrome P450 monooxygenasess poxC or poxD to yield oxaleimide A. Subsequent oxidation yields the maleimide scaffold oxaleimide I. Both oxaleimide A and oxaleimide I can undergo oxidative modifications in the decalin ring to yield the series of products oxaleimides B to H. The chain is Trans-enoyl reductase poxH from Penicillium oxalicum.